A 1578-amino-acid chain; its full sequence is FH1/FH2 domain-containing protein 3 (1578 aa).

In terms of domain architecture, GBD/FH3 spans 18 to 405; the sequence is NSTNFPEPSR…DLCEKDEEEE (388 aa). 7 disordered regions span residues 324-518, 535-824, 915-942, 979-1013, 1418-1462, 1490-1514, and 1528-1565; these read HEDG…DKLP, SPLL…GVNG, VGRG…KTES, LGHR…VPPP, QQKQ…YAED, RTRS…PSVT, and SATQ…PEEA. Residues Ser-345 and Ser-376 each carry the phosphoserine modification. Residues 368 to 383 show a composition bias toward polar residues; sequence IQNIKSPLSAPTSPCS. A compositionally biased stretch (acidic residues) spans 399-425; sequence EKDEEEEEEEEQPITEPNSEEEREDDA. Phosphothreonine is present on Thr-413. Positions 434–446 are enriched in low complexity; that stretch reads ASSASGQSSPGKD. Positions 453–473 are enriched in polar residues; that stretch reads ALHTTSSPTSQGRWLSASTAA. Low complexity predominate over residues 553–583; the sequence is SNFSSNSFQSSRPSPGPSGSPSYASSFSSPQ. The span at 584–598 shows a compositional bias: polar residues; the sequence is DTRSSPSGLLTSSFR. Residues 597 to 645 adopt a coiled-coil conformation; that stretch reads FRQHQESLAAERERRRQEREERLQRIEREERNKFNREYLDKREEQRQAR. Residues 599-651 are compositionally biased toward basic and acidic residues; the sequence is QHQESLAAERERRRQEREERLQRIEREERNKFNREYLDKREEQRQARGERYKY. Low complexity-rich tracts occupy residues 675–684 and 692–701; these read DLSLDLSLPA and SSQSPSADSQ. The span at 751–761 shows a compositional bias: acidic residues; it reads SQEEPVLELEP. Residues 762–782 are compositionally biased toward basic and acidic residues; sequence EERASLSEKERQNEEVNERDN. A compositionally biased stretch (low complexity) spans 784–793; the sequence is SASSISSSSS. Residues 795–809 are compositionally biased toward basic and acidic residues; the sequence is LEREEKEDKLSEDRA. Ser-921 is modified (phosphoserine). Thr-933 bears the Phosphothreonine mark. Residues 985 to 1013 are compositionally biased toward pro residues; sequence PGPPPPPPPTFLGLPPPPPPPLLDSVPPP. Residues 985 to 1016 form the FH1 domain; it reads PGPPPPPPPTFLGLPPPPPPPLLDSVPPPPVP. The FH2 domain maps to 1039–1435; it reads GQPAFTKKKK…HRERNKTRGK (397 aa). Residues 1420 to 1434 are compositionally biased toward basic residues; it reads KQKRANHRERNKTRG. Over residues 1444 to 1456 the composition is skewed to low complexity; it reads SGSSPAAPSQPQG. Residues 1515–1547 form the DAD domain; it reads DDAADEIMDRIVKSATQVPSQRVVPRERKRSRA. Over residues 1541–1556 the composition is skewed to basic residues; that stretch reads ERKRSRANRKSLRRTL.

The protein belongs to the formin homology family. In terms of assembly, interacts with nestin/NES-based interfilament (IF). Interacts with SQSTM1. As to expression, expressed in the heart, including left ventricle, kidney, brain and skeletal muscle, including soleus and tibialis anterior (at protein level).

The protein localises to the cytoplasm. Its subcellular location is the cytoskeleton. It is found in the myofibril. The protein resides in the sarcomere. It localises to the z line. Its function is as follows. May play a role in actin filament polymerization in cardiomyocytes. Actin-organizing protein that may cause stress fiber formation together with cell elongation. The polypeptide is FH1/FH2 domain-containing protein 3 (Fhod3) (Mus musculus (Mouse)).